The primary structure comprises 224 residues: Holliday junction branch migration complex subunit RuvA (224 aa).

Residues 1–64 (MIGRLSGVLV…EDLLQLYGFP (64 aa)) form a domain I region. Positions 65-143 (TLLEKEWHRL…EVMAMGGTLE (79 aa)) are domain II. Residues 144 to 171 (AALDGVIEDGMAASEGIEPPSAARPAVP) form a flexible linker region. The tract at residues 172 to 224 (SAASDQAGALSALVNLGYGQGEAASAVATAAGEGAVGETDIIRAALRLLAPKG) is domain III.

The protein belongs to the RuvA family. As to quaternary structure, homotetramer. Forms an RuvA(8)-RuvB(12)-Holliday junction (HJ) complex. HJ DNA is sandwiched between 2 RuvA tetramers; dsDNA enters through RuvA and exits via RuvB. An RuvB hexamer assembles on each DNA strand where it exits the tetramer. Each RuvB hexamer is contacted by two RuvA subunits (via domain III) on 2 adjacent RuvB subunits; this complex drives branch migration. In the full resolvosome a probable DNA-RuvA(4)-RuvB(12)-RuvC(2) complex forms which resolves the HJ.

Its subcellular location is the cytoplasm. Its function is as follows. The RuvA-RuvB-RuvC complex processes Holliday junction (HJ) DNA during genetic recombination and DNA repair, while the RuvA-RuvB complex plays an important role in the rescue of blocked DNA replication forks via replication fork reversal (RFR). RuvA specifically binds to HJ cruciform DNA, conferring on it an open structure. The RuvB hexamer acts as an ATP-dependent pump, pulling dsDNA into and through the RuvAB complex. HJ branch migration allows RuvC to scan DNA until it finds its consensus sequence, where it cleaves and resolves the cruciform DNA. The sequence is that of Holliday junction branch migration complex subunit RuvA from Dinoroseobacter shibae (strain DSM 16493 / NCIMB 14021 / DFL 12).